A 503-amino-acid chain; its full sequence is ATP synthase subunit alpha (503 aa).

ATP is bound at residue 169–176 (GDRKTGKT).

This sequence belongs to the ATPase alpha/beta chains family. As to quaternary structure, F-type ATPases have 2 components, CF(1) - the catalytic core - and CF(0) - the membrane proton channel. CF(1) has five subunits: alpha(3), beta(3), gamma(1), delta(1), epsilon(1). CF(0) has three main subunits: a(1), b(2) and c(9-12). The alpha and beta chains form an alternating ring which encloses part of the gamma chain. CF(1) is attached to CF(0) by a central stalk formed by the gamma and epsilon chains, while a peripheral stalk is formed by the delta and b chains.

The protein resides in the cell membrane. It carries out the reaction ATP + H2O + 4 H(+)(in) = ADP + phosphate + 5 H(+)(out). Its function is as follows. Produces ATP from ADP in the presence of a proton gradient across the membrane. The alpha chain is a regulatory subunit. This is ATP synthase subunit alpha from Lactobacillus johnsonii (strain CNCM I-12250 / La1 / NCC 533).